The chain runs to 134 residues: Profilin-2 (134 aa).

The cysteines at positions 13 and 118 are disulfide-linked. The Involved in PIP2 interaction signature appears at 84–100; the sequence is AVIRGKKGSGGITIKKT. Thr114 bears the Phosphothreonine mark.

The protein belongs to the profilin family. In terms of assembly, occurs in many kinds of cells as a complex with monomeric actin in a 1:1 ratio. In terms of processing, phosphorylated by MAP kinases.

It localises to the cytoplasm. The protein resides in the cytoskeleton. Binds to actin and affects the structure of the cytoskeleton. At high concentrations, profilin prevents the polymerization of actin, whereas it enhances it at low concentrations. The chain is Profilin-2 from Olea europaea (Common olive).